The following is a 41-amino-acid chain: Augerpeptide-s11a (41 aa).

Post-translationally, contains 4 disulfide bonds. Expressed by the venom duct.

It is found in the secreted. Its function is as follows. Does not elicit any observable symptomatology in C.elegans. This Terebra subulata (Chocolate spotted auger) protein is Augerpeptide-s11a.